Reading from the N-terminus, the 250-residue chain is Small ribosomal subunit protein uS2 (250 aa).

This sequence belongs to the universal ribosomal protein uS2 family.

The sequence is that of Small ribosomal subunit protein uS2 from Acidovorax ebreus (strain TPSY) (Diaphorobacter sp. (strain TPSY)).